The sequence spans 315 residues: uncharacterized protein (315 aa).

It belongs to the carbohydrate kinase PfkB family.

This is an uncharacterized protein from Escherichia coli (strain K12).